The following is a 234-amino-acid chain: Large ribosomal subunit protein uL1 (234 aa).

This sequence belongs to the universal ribosomal protein uL1 family. Part of the 50S ribosomal subunit.

Its function is as follows. Binds directly to 23S rRNA. The L1 stalk is quite mobile in the ribosome, and is involved in E site tRNA release. Protein L1 is also a translational repressor protein, it controls the translation of the L11 operon by binding to its mRNA. The chain is Large ribosomal subunit protein uL1 from Escherichia coli (strain 55989 / EAEC).